A 131-amino-acid chain; its full sequence is Fumarate reductase subunit C (131 aa).

3 helical membrane-spanning segments follow: residues 30–50 (EGTA…LFAL), 57–77 (WMGF…LITL), and 109–129 (IIKG…YVAL).

It belongs to the FrdC family. Part of an enzyme complex containing four subunits: a flavoprotein (FrdA), an iron-sulfur protein (FrdB), and two hydrophobic anchor proteins (FrdC and FrdD).

Its subcellular location is the cell inner membrane. Functionally, two distinct, membrane-bound, FAD-containing enzymes are responsible for the catalysis of fumarate and succinate interconversion; fumarate reductase is used in anaerobic growth, and succinate dehydrogenase is used in aerobic growth. Anchors the catalytic components of the fumarate reductase complex to the cell inner membrane, binds quinones. The protein is Fumarate reductase subunit C of Salmonella choleraesuis (strain SC-B67).